The primary structure comprises 360 residues: GTP 3',8-cyclase (360 aa).

The Radical SAM core domain occupies arginine 33–aspartate 251. Arginine 42 is a GTP binding site. [4Fe-4S] cluster-binding residues include cysteine 49 and cysteine 53. Tyrosine 55 lines the S-adenosyl-L-methionine pocket. Residue cysteine 56 participates in [4Fe-4S] cluster binding. Arginine 93 provides a ligand contact to GTP. Residue glycine 97 participates in S-adenosyl-L-methionine binding. Threonine 124 provides a ligand contact to GTP. Serine 148 contacts S-adenosyl-L-methionine. Lysine 185 provides a ligand contact to GTP. Methionine 219 contributes to the S-adenosyl-L-methionine binding site. Positions 287 and 290 each coordinate [4Fe-4S] cluster. GTP is bound at residue arginine 292–arginine 294. Residue cysteine 304 coordinates [4Fe-4S] cluster.

Belongs to the radical SAM superfamily. MoaA family. In terms of assembly, monomer and homodimer. Requires [4Fe-4S] cluster as cofactor.

The catalysed reaction is GTP + AH2 + S-adenosyl-L-methionine = (8S)-3',8-cyclo-7,8-dihydroguanosine 5'-triphosphate + 5'-deoxyadenosine + L-methionine + A + H(+). The protein operates within cofactor biosynthesis; molybdopterin biosynthesis. Catalyzes the cyclization of GTP to (8S)-3',8-cyclo-7,8-dihydroguanosine 5'-triphosphate. The polypeptide is GTP 3',8-cyclase (Mycobacterium marinum (strain ATCC BAA-535 / M)).